A 312-amino-acid chain; its full sequence is Homoserine O-acetyltransferase (312 aa).

Cys142 (acyl-thioester intermediate) is an active-site residue. Residues Lys163 and Ser192 each contribute to the substrate site. The active-site Proton acceptor is His235. Residue Glu237 is part of the active site. Arg249 contacts substrate.

It belongs to the MetA family.

The protein resides in the cytoplasm. It catalyses the reaction L-homoserine + acetyl-CoA = O-acetyl-L-homoserine + CoA. It participates in amino-acid biosynthesis; L-methionine biosynthesis via de novo pathway; O-acetyl-L-homoserine from L-homoserine: step 1/1. Its function is as follows. Transfers an acetyl group from acetyl-CoA to L-homoserine, forming acetyl-L-homoserine. This chain is Homoserine O-acetyltransferase, found in Chelativorans sp. (strain BNC1).